A 323-amino-acid polypeptide reads, in one-letter code: Aquaporin-4 (323 aa).

The Cytoplasmic portion of the chain corresponds to 1–36 (MSDRPAARRWGKCGPLCTRESIMVAFKGVWTQTFWK). 2 S-palmitoyl cysteine lipidation sites follow: cysteine 13 and cysteine 17. A helical membrane pass occupies residues 37-57 (AVTAEFLAMLIFVLLSLGSTI). At 58–69 (NWGGAEKPLPVD) the chain is on the extracellular side. The chain crosses the membrane as a helical span at residues 70 to 89 (MVLISLCFGLSIATMVQCFG). The Cytoplasmic portion of the chain corresponds to 90-93 (HISG). Residues 94–101 (GHINPAVT) constitute an intramembrane region (discontinuously helical). The short motif at 97–99 (NPA) is the NPA 1 element. The Cytoplasmic segment spans residues 102–115 (VAMVCTRRISIAKS). Phosphoserine; by PKG is present on serine 111. The helical transmembrane segment at 116–136 (VFYIAAQCLGAIIGAGILYLV) threads the bilayer. At 137 to 155 (TPPSVVGGLGVTTVHGNLS) the chain is on the extracellular side. The N-linked (GlcNAc...) asparagine glycan is linked to asparagine 153. A helical membrane pass occupies residues 156 to 176 (AGHGLLVELIITFQLVFTIFA). Residues 177 to 184 (SCDSKRTD) are Cytoplasmic-facing. Serine 180 is modified (phosphoserine; by PKC). The chain crosses the membrane as a helical span at residues 185–205 (VTGSIALAIGISVAIGHLFAI). The N-linked (GlcNAc...) asparagine glycan is linked to asparagine 206. The Extracellular portion of the chain corresponds to 206-208 (NYT). The discontinuously helical intramembrane region spans 209-222 (GASMNPARSFGPAV). Positions 213 to 215 (NPA) match the NPA 2 motif. The Extracellular segment spans residues 223 to 231 (IMGNWENHW). The helical transmembrane segment at 232 to 252 (IYWVGPIIGAVLAGGLYEYVF) threads the bilayer. At 253–323 (CPDVELKRRF…DPSGEVLSSV (71 aa)) the chain is on the cytoplasmic side. Serine 276 and serine 285 each carry phosphoserine. A Phosphothreonine modification is found at threonine 289. A Phosphoserine modification is found at serine 321.

This sequence belongs to the MIP/aquaporin (TC 1.A.8) family. Homotetramer. The tetramers can form oligomeric arrays in membranes. The size of the oligomers differs between tissues and is smaller in skeletal muscle than in brain. Interaction between AQP4 oligomeric arrays in close-by cells can contribute to cell-cell adhesion. Part of a complex containing MLC1, TRPV4, HEPACAM and ATP1B1. Phosphorylation by PKC at Ser-180 reduces conductance by 50%. Phosphorylation by PKG at Ser-111 in response to glutamate increases conductance by 40%. In terms of processing, isoform 2: Palmitoylated on its N-terminal region. Isoform 1: Not palmitoylated. In terms of tissue distribution, detected in brain and lung.

It is found in the cell membrane. The protein resides in the basolateral cell membrane. It localises to the endosome membrane. Its subcellular location is the sarcolemma. The protein localises to the cell projection. It catalyses the reaction H2O(in) = H2O(out). In terms of biological role, forms a water-specific channel. Plays an important role in brain water homeostasis and in glymphatic solute transport. Required for a normal rate of water exchange across the blood brain interface. Required for normal levels of cerebrospinal fluid influx into the brain cortex and parenchyma along paravascular spaces that surround penetrating arteries, and for normal drainage of interstitial fluid along paravenous drainage pathways. Thereby, it is required for normal clearance of solutes from the brain interstitial fluid, including soluble beta-amyloid peptides derived from APP. Plays a redundant role in urinary water homeostasis and urinary concentrating ability. The chain is Aquaporin-4 (AQP4) from Bos taurus (Bovine).